Reading from the N-terminus, the 145-residue chain is Hemoglobin fetal subunit beta (145 aa).

The Globin domain occupies 1-145; it reads MLSAEEKASV…VANALAHRYH (145 aa). Heme b is bound by residues histidine 62 and histidine 91.

Belongs to the globin family. Heterotetramer of two alpha chains and two beta chains. In terms of tissue distribution, red blood cells.

In terms of biological role, involved in oxygen transport from the lung to the various peripheral tissues. This chain is Hemoglobin fetal subunit beta, found in Capra hircus (Goat).